Reading from the N-terminus, the 144-residue chain is MKFLVLAALLTAGTAASGVSPTALWQFRGMIQCTIPGSSPYLEFNGYGCYCGLGGSGTPVDELDRCCQTHDQCYTQAKKLSSCSFLVDNPYTNSYSYSCSGTTVTCSSKNKECEAFICDCDRKAAICFSKRPYNKEYKPISKYC.

Residues 1 to 15 (MKFLVLAALLTAGTA) form the signal peptide. Residues 16–22 (ASGVSPT) constitute a propeptide, activation peptide. Disulfide bonds link Cys-33–Cys-99, Cys-49–Cys-144, Cys-51–Cys-67, Cys-66–Cys-127, Cys-73–Cys-120, Cys-83–Cys-113, and Cys-106–Cys-118. Ca(2+)-binding residues include Tyr-50, Gly-52, and Gly-54. His-70 is a catalytic residue. Asp-71 contacts Ca(2+). Asp-121 is a catalytic residue.

Belongs to the phospholipase A2 family. Monomer or homodimer. Requires Ca(2+) as cofactor. Activated by trypsin cleavage in the duodenum. Can also be activated by thrombin or autocatalytically.

It is found in the secreted. The enzyme catalyses a 1,2-diacyl-sn-glycero-3-phosphocholine + H2O = a 1-acyl-sn-glycero-3-phosphocholine + a fatty acid + H(+). It carries out the reaction 1,2-ditetradecanoyl-sn-glycero-3-phosphocholine + H2O = 1-tetradecanoyl-sn-glycero-3-phosphocholine + tetradecanoate + H(+). It catalyses the reaction 1,2-dihexadecanoyl-sn-glycero-3-phosphocholine + H2O = 1-hexadecanoyl-sn-glycero-3-phosphocholine + hexadecanoate + H(+). The catalysed reaction is 1-hexadecanoyl-2-(9Z-octadecenoyl)-sn-glycero-3-phosphocholine + H2O = 1-hexadecanoyl-sn-glycero-3-phosphocholine + (9Z)-octadecenoate + H(+). The enzyme catalyses 1-hexadecanoyl-2-(5Z,8Z,11Z,14Z-eicosatetraenoyl)-sn-glycero-3-phosphocholine + H2O = 1-hexadecanoyl-sn-glycero-3-phosphocholine + (5Z,8Z,11Z,14Z)-eicosatetraenoate + H(+). It carries out the reaction 1-hexadecanoyl-2-(9Z-octadecenoyl)-sn-glycero-3-phospho-(1'-sn-glycerol) + H2O = 1-hexadecanoyl-sn-glycero-3-phospho-(1'-sn-glycerol) + (9Z)-octadecenoate + H(+). It catalyses the reaction N-hexadecanoyl-1,2-di-(9Z-octadecenoyl)-sn-glycero-3-phosphoethanolamine + H2O = N-hexadecanoyl-1-(9Z-octadecenoyl)-sn-glycero-3-phosphoethanolamine + (9Z)-octadecenoate + H(+). The catalysed reaction is 1-hexadecanoyl-2-(9Z,12Z-octadecadienoyl)-sn-glycero-3-phosphoethanolamine + H2O = 1-hexadecanoyl-sn-glycero-3-phosphoethanolamine + (9Z,12Z)-octadecadienoate + H(+). The enzyme catalyses N,1-dihexadecanoyl-2-(9Z,12Z-octadecadienoyl)-sn-glycero-3-phosphoethanolamine + H2O = N,1-dihexadecanoyl-sn-glycero-3-phosphoethanolamine + (9Z,12Z)-octadecadienoate + H(+). Functionally, secretory calcium-dependent phospholipase A2 that primarily targets dietary phospholipids in the intestinal tract. Hydrolyzes the ester bond of the fatty acyl group attached at sn-2 position of phospholipids (phospholipase A2 activity) with preference for phosphatidylethanolamines and phosphatidylglycerols over phosphatidylcholines. May play a role in the biosynthesis of N-acyl ethanolamines that regulate energy metabolism and inflammation in the intestinal tract. Hydrolyzes N-acyl phosphatidylethanolamines to N-acyl lysophosphatidylethanolamines, which are further cleaved by a lysophospholipase D to release N-acyl ethanolamines. May act in an autocrine and paracrine manner. Has anti-helminth activity in a process regulated by gut microbiota. Upon helminth infection of intestinal epithelia, directly affects phosphatidylethanolamine contents in the membrane of helminth larvae, likely controlling an array of phospholipid-mediated cellular processes such as membrane fusion and cell division while providing for better immune recognition, ultimately reducing larvae integrity and infectivity. The protein is Phospholipase A2 (PLA2G1B) of Oryctolagus cuniculus (Rabbit).